The chain runs to 331 residues: MSDALIATSSEAPQSPAEQYDPTRKQKSADKTARIPIKIVPAEKLKKPDWIRVKAATGSSRFYEIKDILRANNLVTVCEEASCPNIGECFGKGTATFMIMGDKCTRRCPFCDVGHGRPDPLDVNEPGNLARTIAQLKLNYVVITSVDRDDLRDGGAQHYVDCISQTRELSPATRIEVLVPDFRGRLDKALDILQACPPDVMNHNMETVPRLYKQARPGADYEHSLKLLQEFKRRNPNVPTKSGLMVGLGETDEEILEVMRDMRAHDIDMLTIGQYLAPSNHHLPVLRYVHPDTFKMFEEEAYKMGFTHAAVGAMVRSSYHADQQAHQAGFA.

Residues 1 to 33 form a disordered region; it reads MSDALIATSSEAPQSPAEQYDPTRKQKSADKTA. Over residues 7–17 the composition is skewed to polar residues; the sequence is ATSSEAPQSPA. Basic and acidic residues predominate over residues 21 to 33; it reads DPTRKQKSADKTA. [4Fe-4S] cluster is bound by residues Cys78, Cys83, Cys89, Cys104, Cys108, Cys111, and Ser318. Residues 89 to 307 form the Radical SAM core domain; that stretch reads CFGKGTATFM…EEEAYKMGFT (219 aa).

It belongs to the radical SAM superfamily. Lipoyl synthase family. The cofactor is [4Fe-4S] cluster.

The protein localises to the cytoplasm. The enzyme catalyses [[Fe-S] cluster scaffold protein carrying a second [4Fe-4S](2+) cluster] + N(6)-octanoyl-L-lysyl-[protein] + 2 oxidized [2Fe-2S]-[ferredoxin] + 2 S-adenosyl-L-methionine + 4 H(+) = [[Fe-S] cluster scaffold protein] + N(6)-[(R)-dihydrolipoyl]-L-lysyl-[protein] + 4 Fe(3+) + 2 hydrogen sulfide + 2 5'-deoxyadenosine + 2 L-methionine + 2 reduced [2Fe-2S]-[ferredoxin]. Its pathway is protein modification; protein lipoylation via endogenous pathway; protein N(6)-(lipoyl)lysine from octanoyl-[acyl-carrier-protein]: step 2/2. Its function is as follows. Catalyzes the radical-mediated insertion of two sulfur atoms into the C-6 and C-8 positions of the octanoyl moiety bound to the lipoyl domains of lipoate-dependent enzymes, thereby converting the octanoylated domains into lipoylated derivatives. This is Lipoyl synthase from Cupriavidus necator (strain ATCC 17699 / DSM 428 / KCTC 22496 / NCIMB 10442 / H16 / Stanier 337) (Ralstonia eutropha).